The primary structure comprises 487 residues: Lysophospholipid acyltransferase 5 (487 aa).

Ala2 carries the post-translational modification N-acetylalanine. The next 6 helical transmembrane spans lie at 44-64 (LIIS…YLFY), 84-104 (FNFG…FLIL), 111-131 (ITAV…GYYY), 180-200 (GVPS…FLVG), 227-247 (IIPA…YTLL), and 285-305 (VTCW…FNGF). Residues Asn338 and His374 contribute to the active site. 3 helical membrane-spanning segments follow: residues 364–384 (GLSL…LVCF), 422–442 (LVQQ…FCLF), and 453–473 (SIYF…PYIH). Positions 484–487 (KKME) match the Di-lysine motif motif.

It belongs to the membrane-bound acyltransferase family. As to expression, highly expressed in liver, pancreas and adipose tissue. Very low expression in skeletal muscle and heart. Detected in neutrophils.

It localises to the endoplasmic reticulum membrane. It carries out the reaction a 1-acyl-sn-glycero-3-phosphocholine + an acyl-CoA = a 1,2-diacyl-sn-glycero-3-phosphocholine + CoA. The catalysed reaction is a 1-acyl-sn-glycero-3-phosphoethanolamine + an acyl-CoA = a 1,2-diacyl-sn-glycero-3-phosphoethanolamine + CoA. The enzyme catalyses a 1-acyl-sn-glycero-3-phospho-L-serine + an acyl-CoA = a 1,2-diacyl-sn-glycero-3-phospho-L-serine + CoA. It catalyses the reaction (9Z,12Z)-octadecadienoyl-CoA + a 1-acyl-sn-glycero-3-phosphocholine = 1-acyl-2-(9Z,12Z)-octadecadienoyl-sn-glycero-3-phosphocholine + CoA. It carries out the reaction (5Z,8Z,11Z,14Z)-eicosatetraenoyl-CoA + a 1-acyl-sn-glycero-3-phosphocholine = 1-acyl-2-(5Z,8Z,11Z,14Z-eicosatetraenoyl)-sn-glycero-3-phosphocholine + CoA. The catalysed reaction is dodecanoyl-CoA + 1-hexadecanoyl-sn-glycero-3-phosphocholine = 1-hexadecanoyl-2-dodecanoyl-sn-glycero-3-phosphocholine + CoA. The enzyme catalyses octadecanoyl-CoA + 1-hexadecanoyl-sn-glycero-3-phosphocholine = 1-hexadecanoyl-2-octadecanoyl-sn-glycero-3-phosphocholine + CoA. It catalyses the reaction 1-dodecanoyl-sn-glycero-3-phosphocholine + hexadecanoyl-CoA = 1-dodecanoyl-2-hexadecanoyl-sn-glycero-3-phosphocholine + CoA. It carries out the reaction 1-tetradecanoyl-sn-glycero-3-phosphocholine + hexadecanoyl-CoA = 1-tetradecanoyl-2-hexadecanoyl-sn-glycero-3-phosphocholine + CoA. The catalysed reaction is 1-hexadecanoyl-sn-glycero-3-phosphocholine + hexadecanoyl-CoA = 1,2-dihexadecanoyl-sn-glycero-3-phosphocholine + CoA. The enzyme catalyses 1-octadecanoyl-sn-glycero-3-phosphocholine + hexadecanoyl-CoA = 1-octadecanoyl-2-hexadecanoyl-sn-glycero-3-phosphocholine + CoA. It catalyses the reaction 1-(9Z-octadecenoyl)-sn-glycero-3-phosphocholine + hexadecanoyl-CoA = 1-(9Z-octadecenoyl)-2-hexadecanoyl-sn-glycero-3-phosphocholine + CoA. It carries out the reaction (9Z)-hexadecenoyl-CoA + 1-hexadecanoyl-sn-glycero-3-phosphocholine = 1-hexadecanoyl-2-(9Z-hexadecenoyl)-sn-glycero-3-phosphocholine + CoA. The catalysed reaction is 1-hexadecanoyl-sn-glycero-3-phosphocholine + (9Z)-octadecenoyl-CoA = 1-hexadecanoyl-2-(9Z-octadecenoyl)-sn-glycero-3-phosphocholine + CoA. The enzyme catalyses (9Z,12Z)-octadecadienoyl-CoA + 1-hexadecanoyl-sn-glycero-3-phosphocholine = 1-hexadecanoyl-2-(9Z,12Z-octadecadienoyl)-sn-glycero-3-phosphocholine + CoA. It catalyses the reaction 1-dodecanoyl-sn-glycero-3-phosphocholine + (5Z,8Z,11Z,14Z)-eicosatetraenoyl-CoA = 1-dodecanoyl-2-(5Z,8Z,11Z,14Z)-eicosatetraenoyl-sn-glycero-3-phosphocholine + CoA. It carries out the reaction (5Z,8Z,11Z,14Z)-eicosatetraenoyl-CoA + 1-hexadecanoyl-sn-glycero-3-phosphocholine = 1-hexadecanoyl-2-(5Z,8Z,11Z,14Z-eicosatetraenoyl)-sn-glycero-3-phosphocholine + CoA. The catalysed reaction is 1-octadecanoyl-sn-glycero-3-phosphocholine + (5Z,8Z,11Z,14Z)-eicosatetraenoyl-CoA = 1-octadecanoyl-2-(5Z,8Z,11Z,14Z-eicosatetraenoyl)-sn-glycero-3-phosphocholine + CoA. The enzyme catalyses 1-eicosanoyl-sn-glycero-3-phosphocholine + (5Z,8Z,11Z,14Z)-eicosatetraenoyl-CoA = 1-eicosanoyl-2-(5Z,8Z,11Z,14Z)-eicosatetraenoyl-sn-glycero-3-phosphocholine + CoA. It catalyses the reaction 1-(9Z-octadecenoyl)-sn-glycero-3-phosphocholine + (9Z)-octadecenoyl-CoA = 1,2-di-(9Z-octadecenoyl)-sn-glycero-3-phosphocholine + CoA. It carries out the reaction 1-(9Z-octadecenoyl)-sn-glycero-3-phosphocholine + (9Z,12Z)-octadecadienoyl-CoA = 1-(9Z)-octadecenoyl-2-(9Z,12Z)-octadecadienoyl-sn-glycero-3-phosphocholine + CoA. The catalysed reaction is 1-(9Z-octadecenoyl)-sn-glycero-3-phosphocholine + (5Z,8Z,11Z,14Z)-eicosatetraenoyl-CoA = 1-(9Z)-octadecenoyl-2-(5Z,8Z,11Z,14Z)-icosatetraenoyl-sn-glycero-3-phosphocholine + CoA. The enzyme catalyses a 1-acyl-sn-glycero-3-phosphoethanolamine + (9Z,12Z)-octadecadienoyl-CoA = 1-acyl-2-(9Z,12Z)-octadecadienoyl-sn-glycero-3-phosphoethanolamine + CoA. It catalyses the reaction 1-(9Z-octadecenoyl)-sn-glycero-3-phosphoethanolamine + (9Z,12Z)-octadecadienoyl-CoA = 1-(9Z)-octadecenoyl-2-(9Z,12Z)-octadecadienoyl-sn-glycero-3-phosphoethanolamine + CoA. It carries out the reaction 1-(10Z-heptadecenoyl)-sn-glycero-3-phosphoethanolamine + (9Z,12Z)-octadecadienoyl-CoA = 1-(10Z-heptadecenoyl)-2-(9Z,12Z-octadecadienoyl)-sn-glycero-3-phosphoethanolamine + CoA. The catalysed reaction is a 1-acyl-sn-glycero-3-phosphoethanolamine + (5Z,8Z,11Z,14Z)-eicosatetraenoyl-CoA = 1-acyl-2-(5Z,8Z,11Z,14Z)-eicosatetraenoyl-sn-glycero-3-phosphoethanolamine + CoA. The enzyme catalyses 1-hexadecanoyl-sn-glycero-3-phosphoethanolamine + (5Z,8Z,11Z,14Z)-eicosatetraenoyl-CoA = 1-hexadecanoyl-2-(5Z,8Z,11Z,14Z-eicosatetraenoyl)-sn-glycero-3-phosphoethanolamine + CoA. It catalyses the reaction 1-(9Z-octadecenoyl)-sn-glycero-3-phosphoethanolamine + (5Z,8Z,11Z,14Z)-eicosatetraenoyl-CoA = 1-(9Z)-octadecenoyl-2-(5Z,8Z,11Z,14Z)-eicosatetraenoyl-sn-glycero-3-phosphoethanolamine + CoA. It carries out the reaction 1-(10Z-heptadecenoyl)-sn-glycero-3-phosphoethanolamine + (5Z,8Z,11Z,14Z)-eicosatetraenoyl-CoA = 1-(10Z-heptadecenoyl)-2-(5Z,8Z,11Z,14Z-eicosatetraenoyl)-sn-glycero-3-phosphoethanolamine + CoA. The catalysed reaction is a 1-O-(1Z-alkenyl)-sn-glycero-3-phosphoethanolamine + (5Z,8Z,11Z,14Z)-eicosatetraenoyl-CoA = 1-O-(1Z)-alkenyl-2-(5Z,8Z,11Z,14Z)-eicosatetraenoyl-sn-glycero-3-phosphoethanolamine + CoA. The enzyme catalyses a 1-acyl-sn-glycero-3-phospho-L-serine + (9Z,12Z)-octadecadienoyl-CoA = 1-acyl-2-(9Z,12Z-octadecadienoyl)-sn-glycero-3-phospho-L-serine + CoA. It catalyses the reaction a 1-acyl-sn-glycero-3-phospho-L-serine + (5Z,8Z,11Z,14Z)-eicosatetraenoyl-CoA = 1-acyl-2-(5Z,8Z,11Z,14Z-eicosatetraenoyl)-sn-glycero-3-phospho-L-serine + CoA. It carries out the reaction 1-hexadecanoyl-sn-glycero-3-phospho-L-serine + (9Z)-octadecenoyl-CoA = 1-hexadecanoyl-2-(9Z-octadecenoyl)-sn-glycero-3-phospho-L-serine + CoA. The catalysed reaction is 1-(9Z-octadecenoyl)-sn-glycero-3-phospho-L-serine + (9Z)-octadecenoyl-CoA = 1,2-di-(9Z)-octadecenoyl-sn-glycero-3-phospho-L-serine + CoA. The enzyme catalyses 1-hexadecanoyl-sn-glycero-3-phospho-L-serine + (9Z,12Z)-octadecadienoyl-CoA = 1-hexadecanoyl-2-(9Z,12Z-octadecadienoyl)-sn-glycero-3-phospho-L-serine + CoA. It catalyses the reaction 1-(9Z-octadecenoyl)-sn-glycero-3-phospho-L-serine + (9Z,12Z)-octadecadienoyl-CoA = 1-(9Z-octadecenoyl)-2-(9Z,12Z-octadienoyl)-sn-glycero-3-phospho-L-serine + CoA. It carries out the reaction 1-hexadecanoyl-sn-glycero-3-phospho-L-serine + (5Z,8Z,11Z,14Z)-eicosatetraenoyl-CoA = 1-hexadecanoyl-2-(5Z,8Z,11Z,14Z-eicosatetraenoyl)-sn-glycero-3-phospho-L-serine + CoA. The catalysed reaction is 1-(9Z-octadecenoyl)-sn-glycero-3-phospho-L-serine + (5Z,8Z,11Z,14Z)-eicosatetraenoyl-CoA = 1-(9Z-octadecenoyl)-2-(5Z,8Z,11Z,14Z-eicosatetraenoyl)-sn-glycero-3-phospho-L-serine + CoA. The protein operates within lipid metabolism; phospholipid metabolism. Its activity is regulated as follows. Activity is inhibited by thimerosal. Functionally, lysophospholipid O-acyltransferase (LPLAT) that catalyzes the reacylation step of the phospholipid remodeling process also known as the Lands cycle. Catalyzes transfer of the fatty acyl chain from fatty acyl-CoA to 1-acyl lysophospholipid to form various classes of phospholipids. Converts 1-acyl lysophosphatidylcholine (LPC) into phosphatidylcholine (PC) (LPCAT activity), 1-acyl lysophosphatidylserine (LPS) into phosphatidylserine (PS) (LPSAT activity) and 1-acyl lysophosphatidylethanolamine (LPE) into phosphatidylethanolamine (PE) (LPEAT activity). Favors polyunsaturated fatty acyl-CoAs as acyl donors compared to saturated fatty acyl-CoAs. Has higher activity for LPC acyl acceptors compared to LPEs and LPSs. Can also transfer the fatty acyl chain from fatty acyl-CoA to 1-O-alkyl lysophospholipid or 1-O-alkenyl lysophospholipid with lower efficiency. Acts as a major LPC O-acyltransferase in liver and intestine. As a component of the liver X receptor/NR1H3 or NR1H2 signaling pathway, mainly catalyzes the incorporation of arachidonate into PCs of endoplasmic reticulum (ER) membranes, increasing membrane dynamics and enabling triacylglycerols transfer to nascent very low-density lipoprotein (VLDL) particles. Promotes processing of sterol regulatory protein SREBF1 in hepatocytes, likely by facilitating the translocation of SREBF1-SCAP complex from ER to the Golgi apparatus. Participates in mechanisms by which the liver X receptor/NR1H3 or NR1H2 signaling pathway counteracts lipid-induced ER stress response and inflammation. Down-regulates hepatic inflammation by limiting arachidonic acid availability for synthesis of inflammatory eicosanoids, such as prostaglandins. In enterocytes, acts as a component of a gut-brain feedback loop that coordinates dietary lipid absorption and food intake. Regulates the abundance of PCs containing linoleate and arachidonate in enterocyte membranes, enabling passive diffusion of fatty acids and cholesterol across the membrane for efficient chylomicron assembly. In the intestinal crypt, acts as a component of dietary-responsive phospholipid-cholesterol axis, regulating the biosynthesis of cholesterol and its mitogenic effects on intestinal stem cells. This chain is Lysophospholipid acyltransferase 5 (LPCAT3), found in Homo sapiens (Human).